A 259-amino-acid polypeptide reads, in one-letter code: Type III pantothenate kinase (259 aa).

6-13 (DAGNTNIV) lines the ATP pocket. Substrate-binding positions include Tyr-100 and 107–110 (GADR). The active-site Proton acceptor is Asp-109. Asp-129 is a binding site for K(+). ATP is bound at residue Thr-132. Substrate is bound at residue Thr-184.

This sequence belongs to the type III pantothenate kinase family. As to quaternary structure, homodimer. NH4(+) is required as a cofactor. K(+) serves as cofactor.

It is found in the cytoplasm. The enzyme catalyses (R)-pantothenate + ATP = (R)-4'-phosphopantothenate + ADP + H(+). The protein operates within cofactor biosynthesis; coenzyme A biosynthesis; CoA from (R)-pantothenate: step 1/5. In terms of biological role, catalyzes the phosphorylation of pantothenate (Pan), the first step in CoA biosynthesis. This chain is Type III pantothenate kinase, found in Clostridium novyi (strain NT).